Here is a 126-residue protein sequence, read N- to C-terminus: Prefoldin subunit beta (126 aa).

It belongs to the prefoldin subunit beta family. As to quaternary structure, heterohexamer of two alpha and four beta subunits.

It is found in the cytoplasm. In terms of biological role, molecular chaperone capable of stabilizing a range of proteins. Seems to fulfill an ATP-independent, HSP70-like function in archaeal de novo protein folding. This Pyrobaculum neutrophilum (strain DSM 2338 / JCM 9278 / NBRC 100436 / V24Sta) (Thermoproteus neutrophilus) protein is Prefoldin subunit beta.